The following is a 390-amino-acid chain: Leucine aminopeptidase 1 (390 aa).

The first 18 residues, 1–18 (MKLSTALVLGATATGAWS), serve as a signal peptide directing secretion. Residues 19-90 (YAIPQLEQEV…FPTLDAGSYV (72 aa)) constitute a propeptide that is removed on maturation. The N-linked (GlcNAc...) asparagine glycan is linked to Asn120. Zn(2+)-binding residues include His190, Asp209, Glu248, and Asp275. Cys324 and Cys328 form a disulfide bridge. His357 provides a ligand contact to Zn(2+).

This sequence belongs to the peptidase M28 family. M28E subfamily. As to quaternary structure, monomer. It depends on Zn(2+) as a cofactor.

It is found in the secreted. Its function is as follows. Extracellular aminopeptidase that allows assimilation of proteinaceous substrates. This Emericella nidulans (strain FGSC A4 / ATCC 38163 / CBS 112.46 / NRRL 194 / M139) (Aspergillus nidulans) protein is Leucine aminopeptidase 1 (lap1).